The chain runs to 692 residues: Translation initiation factor IF-2 (692 aa).

Residues 194-363 (PRPPIVTVMG…LLVAEMEDLK (170 aa)) form the tr-type G domain. The segment at 203-210 (GHVDHGKT) is G1. A GTP-binding site is contributed by 203 to 210 (GHVDHGKT). The G2 stretch occupies residues 228–232 (GITQH). The tract at residues 249–252 (DTPG) is G3. GTP is bound by residues 249-253 (DTPGH) and 303-306 (NKID). The segment at 303–306 (NKID) is G4. Positions 339–341 (SAK) are G5.

Belongs to the TRAFAC class translation factor GTPase superfamily. Classic translation factor GTPase family. IF-2 subfamily.

It localises to the cytoplasm. Its function is as follows. One of the essential components for the initiation of protein synthesis. Protects formylmethionyl-tRNA from spontaneous hydrolysis and promotes its binding to the 30S ribosomal subunits. Also involved in the hydrolysis of GTP during the formation of the 70S ribosomal complex. This is Translation initiation factor IF-2 from Thermoanaerobacter sp. (strain X514).